Reading from the N-terminus, the 182-residue chain is Segregation and condensation protein B (182 aa).

The protein belongs to the ScpB family. In terms of assembly, homodimer. Homodimerization may be required to stabilize the binding of ScpA to the Smc head domains. Component of a cohesin-like complex composed of ScpA, ScpB and the Smc homodimer, in which ScpA and ScpB bind to the head domain of Smc. The presence of the three proteins is required for the association of the complex with DNA.

It is found in the cytoplasm. Its function is as follows. Participates in chromosomal partition during cell division. May act via the formation of a condensin-like complex containing Smc and ScpA that pull DNA away from mid-cell into both cell halves. This Staphylococcus saprophyticus subsp. saprophyticus (strain ATCC 15305 / DSM 20229 / NCIMB 8711 / NCTC 7292 / S-41) protein is Segregation and condensation protein B.